Reading from the N-terminus, the 251-residue chain is HTH-type transcriptional regulator IolR (251 aa).

Positions Met1–Ser57 constitute an HTH deoR-type domain. A DNA-binding region (H-T-H motif) is located at residues Val19–Asp38.

Functionally, iol operon repressor. This chain is HTH-type transcriptional regulator IolR (iolR), found in Bacillus subtilis (strain 168).